Consider the following 428-residue polypeptide: Enolase (428 aa).

Q165 is a binding site for (2R)-2-phosphoglycerate. Residue E207 is the Proton donor of the active site. D244, E285, and D312 together coordinate Mg(2+). (2R)-2-phosphoglycerate-binding residues include K337, R366, S367, and K388. The Proton acceptor role is filled by K337.

This sequence belongs to the enolase family. In terms of assembly, component of the RNA degradosome, a multiprotein complex involved in RNA processing and mRNA degradation. Mg(2+) is required as a cofactor.

The protein resides in the cytoplasm. It localises to the secreted. The protein localises to the cell surface. It carries out the reaction (2R)-2-phosphoglycerate = phosphoenolpyruvate + H2O. Its pathway is carbohydrate degradation; glycolysis; pyruvate from D-glyceraldehyde 3-phosphate: step 4/5. Catalyzes the reversible conversion of 2-phosphoglycerate (2-PG) into phosphoenolpyruvate (PEP). It is essential for the degradation of carbohydrates via glycolysis. In Coxiella burnetii (strain CbuK_Q154) (Coxiella burnetii (strain Q154)), this protein is Enolase.